Reading from the N-terminus, the 271-residue chain is Mannosyl-3-phosphoglycerate phosphatase (271 aa).

The Nucleophile role is filled by D13. Residues D13, D15, and D214 each coordinate Mg(2+).

This sequence belongs to the HAD-like hydrolase superfamily. MPGP family. Requires Mg(2+) as cofactor.

It localises to the cytoplasm. The enzyme catalyses 2-O-(alpha-D-mannosyl)-3-phosphoglycerate + H2O = (2R)-2-O-(alpha-D-mannosyl)-glycerate + phosphate. The chain is Mannosyl-3-phosphoglycerate phosphatase from Escherichia coli (strain SMS-3-5 / SECEC).